We begin with the raw amino-acid sequence, 202 residues long: Small ribosomal subunit protein uS4 (202 aa).

Residues 90-152 enclose the S4 RNA-binding domain; it reads MRLDNTVFRL…ERSRRLVETN (63 aa).

It belongs to the universal ribosomal protein uS4 family. Part of the 30S ribosomal subunit. Contacts protein S5. The interaction surface between S4 and S5 is involved in control of translational fidelity.

In terms of biological role, one of the primary rRNA binding proteins, it binds directly to 16S rRNA where it nucleates assembly of the body of the 30S subunit. With S5 and S12 plays an important role in translational accuracy. The polypeptide is Small ribosomal subunit protein uS4 (Thermosynechococcus vestitus (strain NIES-2133 / IAM M-273 / BP-1)).